The chain runs to 1498 residues: DNA-directed RNA polymerase subunit beta' (1498 aa).

Cys67, Cys69, Cys82, and Cys85 together coordinate Zn(2+). Residues Asp499, Asp501, and Asp503 each coordinate Mg(2+). Residues Cys867, Cys943, Cys950, and Cys953 each contribute to the Zn(2+) site.

It belongs to the RNA polymerase beta' chain family. The RNAP catalytic core consists of 2 alpha, 1 beta, 1 beta' and 1 omega subunit. When a sigma factor is associated with the core the holoenzyme is formed, which can initiate transcription. The cofactor is Mg(2+). It depends on Zn(2+) as a cofactor.

The enzyme catalyses RNA(n) + a ribonucleoside 5'-triphosphate = RNA(n+1) + diphosphate. DNA-dependent RNA polymerase catalyzes the transcription of DNA into RNA using the four ribonucleoside triphosphates as substrates. The protein is DNA-directed RNA polymerase subunit beta' of Chlorobium luteolum (strain DSM 273 / BCRC 81028 / 2530) (Pelodictyon luteolum).